The primary structure comprises 537 residues: Aminopeptidase Y (537 aa).

The signal sequence occupies residues 1 to 21 (MHFSLKQLAVAAFYATNLGSA). Residues 22–56 (YVIPQFFQEAFQQEEPIENYLPQLNDDDSSAVAAN) constitute a propeptide that is removed on maturation. Asn85, Asn96, Asn115, Asn150, and Asn162 each carry an N-linked (GlcNAc...) asparagine glycan. His314 and Asp326 together coordinate Zn(2+). The active-site Proton acceptor is Glu358. Glu359 serves as a coordination point for Zn(2+). An N-linked (GlcNAc...) asparagine glycan is attached at Asn371. Asp387 lines the Zn(2+) pocket. Residue Asn427 is glycosylated (N-linked (GlcNAc...) asparagine). His472 is a binding site for Zn(2+). A glycan (N-linked (GlcNAc...) asparagine) is linked at Asn480.

The protein belongs to the peptidase M28 family. M28A subfamily. In terms of assembly, monomer. It depends on Zn(2+) as a cofactor.

The protein resides in the vacuole. The catalysed reaction is Preferentially, release of N-terminal lysine.. The sequence is that of Aminopeptidase Y (APE3) from Saccharomyces cerevisiae (strain ATCC 204508 / S288c) (Baker's yeast).